Reading from the N-terminus, the 413-residue chain is Glutamyl-tRNA reductase (413 aa).

Substrate contacts are provided by residues 49 to 52, serine 105, 110 to 112, and glutamine 116; these read TCNR and EPQ. Catalysis depends on cysteine 50, which acts as the Nucleophile. 185–190 is a binding site for NADP(+); that stretch reads GAGETI.

It belongs to the glutamyl-tRNA reductase family. In terms of assembly, homodimer.

The catalysed reaction is (S)-4-amino-5-oxopentanoate + tRNA(Glu) + NADP(+) = L-glutamyl-tRNA(Glu) + NADPH + H(+). Its pathway is porphyrin-containing compound metabolism; protoporphyrin-IX biosynthesis; 5-aminolevulinate from L-glutamyl-tRNA(Glu): step 1/2. Catalyzes the NADPH-dependent reduction of glutamyl-tRNA(Glu) to glutamate 1-semialdehyde (GSA). The sequence is that of Glutamyl-tRNA reductase from Coxiella burnetii (strain Dugway 5J108-111).